Here is a 246-residue protein sequence, read N- to C-terminus: UPF0736 protein GK0808 (246 aa).

The protein belongs to the UPF0736 family.

The sequence is that of UPF0736 protein GK0808 from Geobacillus kaustophilus (strain HTA426).